The primary structure comprises 220 residues: Iron-sulfur cluster repair protein YtfE (220 aa).

The protein belongs to the RIC family. YtfE subfamily. In terms of assembly, homodimer.

Its subcellular location is the cytoplasm. Functionally, di-iron-containing protein involved in the repair of iron-sulfur clusters damaged by oxidative and nitrosative stress conditions. The sequence is that of Iron-sulfur cluster repair protein YtfE from Shigella boydii serotype 18 (strain CDC 3083-94 / BS512).